The primary structure comprises 565 residues: Proline--tRNA ligase (565 aa).

The protein belongs to the class-II aminoacyl-tRNA synthetase family. ProS type 1 subfamily. Homodimer.

The protein resides in the cytoplasm. It carries out the reaction tRNA(Pro) + L-proline + ATP = L-prolyl-tRNA(Pro) + AMP + diphosphate. Functionally, catalyzes the attachment of proline to tRNA(Pro) in a two-step reaction: proline is first activated by ATP to form Pro-AMP and then transferred to the acceptor end of tRNA(Pro). As ProRS can inadvertently accommodate and process non-cognate amino acids such as alanine and cysteine, to avoid such errors it has two additional distinct editing activities against alanine. One activity is designated as 'pretransfer' editing and involves the tRNA(Pro)-independent hydrolysis of activated Ala-AMP. The other activity is designated 'posttransfer' editing and involves deacylation of mischarged Ala-tRNA(Pro). The misacylated Cys-tRNA(Pro) is not edited by ProRS. This Francisella tularensis subsp. novicida (strain U112) protein is Proline--tRNA ligase.